Here is a 307-residue protein sequence, read N- to C-terminus: D-alanine--D-alanine ligase (307 aa).

The region spanning 101 to 301 (KTVMRAAGVD…FGELVRWMVE (201 aa)) is the ATP-grasp domain. 127–182 (PLPPPYVVKPIAEGSSVGVIIVRDGRSHPPQILASEEWTFGEQVLAEPYIAGRELT) contacts ATP. Residues D251, E268, and N270 each contribute to the Mg(2+) site.

Belongs to the D-alanine--D-alanine ligase family. Mg(2+) serves as cofactor. Mn(2+) is required as a cofactor.

The protein resides in the cytoplasm. The catalysed reaction is 2 D-alanine + ATP = D-alanyl-D-alanine + ADP + phosphate + H(+). Its pathway is cell wall biogenesis; peptidoglycan biosynthesis. In terms of biological role, cell wall formation. In Methylobacterium radiotolerans (strain ATCC 27329 / DSM 1819 / JCM 2831 / NBRC 15690 / NCIMB 10815 / 0-1), this protein is D-alanine--D-alanine ligase.